The primary structure comprises 1021 residues: Sodium/potassium-transporting ATPase subunit alpha-1 (1021 aa).

A propeptide spanning residues 1–5 (MGKGA) is cleaved from the precursor. The segment covering 1–11 (MGKGAGRDKYE) has biased composition (basic and acidic residues). The disordered stretch occupies residues 1-31 (MGKGAGRDKYEPTATSEHGTKKKKAKERDMD). At 6 to 85 (GRDKYEPTAT…NTLTPPPTTP (80 aa)) the chain is on the cytoplasmic side. Tyrosine 10 bears the Phosphotyrosine mark. Phosphoserine; by PKC is present on serine 16. A phosphoinositide-3 kinase binding region spans residues 80 to 82 (PPP). The chain crosses the membrane as a helical span at residues 86-106 (EWVKFCRQLFGGFSLLLWIGS). Topologically, residues 107-129 (LLCFLAYGITSVMEGEPNSDNLY) are extracellular. Residues 130-150 (LGVVLAAVVIITGCFSYYQEA) form a helical membrane-spanning segment. The Cytoplasmic portion of the chain corresponds to 151–286 (KSSKIMESFK…GGKTPIAMEI (136 aa)). Residues 214–233 (SSLTGESEPQTRSPDFSNEN) are disordered. Residues 287 to 306 (EHFIHLITGVAVFLGVSFFI) form a helical membrane-spanning segment. The Extracellular segment spans residues 307–318 (LSLILEYTWLEA). Residues 319–336 (VIFLIGIIVANVPEGLLA) traverse the membrane as a helical segment. Over 337 to 770 (TVTVCLTLTA…EEGRLIFDNL (434 aa)) the chain is Cytoplasmic. Residue aspartate 374 is the 4-aspartylphosphate intermediate of the active site. Position 485 (lysine 485) interacts with ATP. Mg(2+) contacts are provided by aspartate 715 and aspartate 719. The chain crosses the membrane as a helical span at residues 771–790 (KKSIAYTLTSNIPEITPFLI). The Extracellular segment spans residues 791–800 (FIIANIPLPL). The chain crosses the membrane as a helical span at residues 801-821 (GTCTILCIDLGTDMVPAISLA). Residues 822 to 841 (YEQAESDIMKRQPRNPKTDK) are Cytoplasmic-facing. A helical membrane pass occupies residues 842–864 (LVNERLISMAYGQIGMIQALGGF). Topologically, residues 865–916 (FTYFVIMAENGFLPSGLVGIRLQWDDRWINDVEDSYGQQWTFEQRKIVEFTC) are extracellular. Residues 917–936 (HTAFFVSIVVVQWADLIICK) form a helical membrane-spanning segment. Topologically, residues 937-949 (TRRNSVFQQGMKN) are cytoplasmic. Phosphoserine; by PKA is present on serine 941. A helical transmembrane segment spans residues 950 to 968 (KILIFGLFEETALAAFLSY). Residues 969 to 983 (CPGMDVALRMYPLKP) lie on the Extracellular side of the membrane. A helical membrane pass occupies residues 984-1004 (TWWFCAFPYSLLIFLYDEIRK). The Cytoplasmic segment spans residues 1005-1021 (LIIRRNPGGWVERETYY).

It belongs to the cation transport ATPase (P-type) (TC 3.A.3) family. Type IIC subfamily. As to quaternary structure, the sodium/potassium-transporting ATPase is composed of a catalytic alpha subunit, an auxiliary non-catalytic beta subunit and an additional regulatory subunit. Post-translationally, phosphorylation on Tyr-10 modulates pumping activity.

The protein resides in the cell membrane. Its subcellular location is the sarcolemma. The catalysed reaction is K(+)(out) + Na(+)(in) + ATP + H2O = K(+)(in) + Na(+)(out) + ADP + phosphate + H(+). Functionally, this is the catalytic component of the active enzyme, which catalyzes the hydrolysis of ATP coupled with the exchange of sodium and potassium ions across the plasma membrane. This action creates the electrochemical gradient of sodium and potassium ions, providing the energy for active transport of various nutrients. This chain is Sodium/potassium-transporting ATPase subunit alpha-1 (ATP1A1), found in Gallus gallus (Chicken).